The following is a 340-amino-acid chain: Guanine nucleotide-binding protein G(I)/G(S)/G(T) subunit beta-3 (340 aa).

WD repeat units lie at residues glycine 53–aspartate 83, leucine 95–asparagine 125, alanine 141–aspartate 170, glycine 182–aspartate 212, glycine 224–aspartate 254, serine 268–aspartate 298, and glycine 310–asparagine 340.

The protein belongs to the WD repeat G protein beta family. In terms of assembly, g proteins are composed of 3 units, alpha, beta and gamma. Interacts with RASD2.

Functionally, guanine nucleotide-binding proteins (G proteins) are involved as a modulator or transducer in various transmembrane signaling systems. The beta and gamma chains are required for the GTPase activity, for replacement of GDP by GTP, and for G protein-effector interaction. This Mus musculus (Mouse) protein is Guanine nucleotide-binding protein G(I)/G(S)/G(T) subunit beta-3 (Gnb3).